A 335-amino-acid polypeptide reads, in one-letter code: Ferredoxin--NADP reductase (335 aa).

FAD is bound by residues Asp-34, Gln-42, Tyr-47, Ala-87, Phe-121, Asp-287, and Thr-328.

Belongs to the ferredoxin--NADP reductase type 2 family. As to quaternary structure, homodimer. Requires FAD as cofactor.

It carries out the reaction 2 reduced [2Fe-2S]-[ferredoxin] + NADP(+) + H(+) = 2 oxidized [2Fe-2S]-[ferredoxin] + NADPH. This chain is Ferredoxin--NADP reductase, found in Rickettsia felis (strain ATCC VR-1525 / URRWXCal2) (Rickettsia azadi).